An 87-amino-acid polypeptide reads, in one-letter code: Protein anon-73B1 (87 aa).

The helical transmembrane segment at 25–47 (LLIRYGLYVGALFQFVCISAAVL) threads the bilayer. A disordered region spans residues 50–87 (NNPDSQSNPETGEVTEREGEPVRTRLHKIRKLEKKKRR). Over residues 63–72 (VTEREGEPVR) the composition is skewed to basic and acidic residues. Basic residues predominate over residues 73–87 (TRLHKIRKLEKKKRR).

It belongs to the UPF0239 family.

It is found in the membrane. The chain is Protein anon-73B1 (anon-73B1) from Drosophila simulans (Fruit fly).